Here is a 372-residue protein sequence, read N- to C-terminus: Cytochrome b (372 aa).

A run of 4 helical transmembrane segments spans residues Phe-25–Leu-45, Trp-69–Ile-90, Trp-105–Leu-125, and Phe-170–Ile-190. His-75 and His-89 together coordinate heme b. Heme b contacts are provided by His-174 and His-188. His-193 lines the a ubiquinone pocket. The next 4 helical transmembrane spans lie at Tyr-218 to Ala-238, Leu-280 to His-300, Leu-312 to Ser-332, and Phe-339 to Pro-358.

Belongs to the cytochrome b family. The cytochrome bc1 complex contains 3 respiratory subunits (MT-CYB, CYC1 and UQCRFS1), 2 core proteins (UQCRC1 and UQCRC2) and probably 6 low-molecular weight proteins. Requires heme b as cofactor.

Its subcellular location is the mitochondrion inner membrane. Component of the ubiquinol-cytochrome c reductase complex (complex III or cytochrome b-c1 complex) that is part of the mitochondrial respiratory chain. The b-c1 complex mediates electron transfer from ubiquinol to cytochrome c. Contributes to the generation of a proton gradient across the mitochondrial membrane that is then used for ATP synthesis. In Naja nivea (Cape cobra), this protein is Cytochrome b (MT-CYB).